Here is an 858-residue protein sequence, read N- to C-terminus: Putative glutamate--cysteine ligase 2-3 (858 aa).

Positions 1 to 372 (MSDARNVAVG…RDVPPAGASL (372 aa)) are carboxylate-amine ligase. The interval 373-858 (GVAPAVSAPD…GSKDTWIPRR (486 aa)) is unknown.

It in the N-terminal section; belongs to the glutamate--cysteine ligase type 2 family. YbdK subfamily.

The catalysed reaction is L-cysteine + L-glutamate + ATP = gamma-L-glutamyl-L-cysteine + ADP + phosphate + H(+). Functionally, ATP-dependent carboxylate-amine ligase which exhibits weak glutamate--cysteine ligase activity. The protein is Putative glutamate--cysteine ligase 2-3 of Frankia alni (strain DSM 45986 / CECT 9034 / ACN14a).